The chain runs to 591 residues: Indole-3-acetic acid-amido synthetase GH3.10 (591 aa).

It belongs to the IAA-amido conjugating enzyme family. As to expression, expressed in cotyledons and hypocotyls.

Functionally, catalyzes the synthesis of indole-3-acetic acid (IAA)-amino acid conjugates, providing a mechanism for the plant to cope with the presence of excess auxin. Involved in red light-specific hypocotyl elongation. May act downstream of a red light signal transduction and determine the degree of hypocotyl elongation. This Arabidopsis thaliana (Mouse-ear cress) protein is Indole-3-acetic acid-amido synthetase GH3.10.